We begin with the raw amino-acid sequence, 363 residues long: Phosphoserine aminotransferase (363 aa).

An L-glutamate-binding site is contributed by Arg41. Residues 75 to 76 (AS), Trp100, Thr155, Asp175, and Gln198 contribute to the pyridoxal 5'-phosphate site. An N6-(pyridoxal phosphate)lysine modification is found at Lys199. Pyridoxal 5'-phosphate is bound at residue 239–240 (NT).

Belongs to the class-V pyridoxal-phosphate-dependent aminotransferase family. SerC subfamily. Homodimer. Pyridoxal 5'-phosphate is required as a cofactor.

Its subcellular location is the cytoplasm. The catalysed reaction is O-phospho-L-serine + 2-oxoglutarate = 3-phosphooxypyruvate + L-glutamate. It carries out the reaction 4-(phosphooxy)-L-threonine + 2-oxoglutarate = (R)-3-hydroxy-2-oxo-4-phosphooxybutanoate + L-glutamate. It participates in amino-acid biosynthesis; L-serine biosynthesis; L-serine from 3-phospho-D-glycerate: step 2/3. In terms of biological role, catalyzes the reversible conversion of 3-phosphohydroxypyruvate to phosphoserine and of 3-hydroxy-2-oxo-4-phosphonooxybutanoate to phosphohydroxythreonine. The polypeptide is Phosphoserine aminotransferase (Streptococcus agalactiae serotype III (strain NEM316)).